A 283-amino-acid polypeptide reads, in one-letter code: Transcription factor bHLH104 (283 aa).

The tract at residues 96-134 (VEINSGSSGGAVKEEQEHLDDDCSRKRARTGSCSRGGGT) is disordered. A compositionally biased stretch (basic and acidic residues) spans 107–120 (VKEEQEHLDDDCSR). The bHLH domain occupies 130–181 (RGGGTKACRERLRREKLNERFMDLSSVLEPGRTPKTDKPAILDDAIRILNQL).

As to quaternary structure, homodimer. Interacts with BTS and BHLH47/PYE.

The protein resides in the nucleus. The polypeptide is Transcription factor bHLH104 (BHLH104) (Arabidopsis thaliana (Mouse-ear cress)).